The primary structure comprises 91 residues: UPF0250 protein Lcho_4239 (91 aa).

The protein belongs to the UPF0250 family.

The protein is UPF0250 protein Lcho_4239 of Leptothrix cholodnii (strain ATCC 51168 / LMG 8142 / SP-6) (Leptothrix discophora (strain SP-6)).